A 496-amino-acid polypeptide reads, in one-letter code: Deoxyribodipyrimidine photo-lyase (496 aa).

The region spanning 28–160 is the Photolyase/cryptochrome alpha/beta domain; it reads GPVVYWMFRD…EVDAHNVVPM (133 aa). Residues tyrosine 256, 269-273, 307-315, and 415-417 each bind FAD; these read LSGLS, ELIVRRELS, and DGR. Residue glutamate 307 coordinates DNA.

Belongs to the DNA photolyase class-2 family. Requires FAD as cofactor. As to expression, highly expressed in flowers. Expressed in roots and stems.

Its subcellular location is the nucleus. It carries out the reaction cyclobutadipyrimidine (in DNA) = 2 pyrimidine residues (in DNA).. Involved in repair of UV radiation-induced DNA damage. Catalyzes the light-dependent monomerization (300-600 nm) of cyclobutylpyrimidine dimers (CPDs), which are formed between adjacent bases on the same DNA strand upon exposure to ultraviolet radiation. Required for plant survival in the presence of UV-B light. Not involved in the repair of (6-4) photoproducts. This is Deoxyribodipyrimidine photo-lyase (PHR1) from Arabidopsis thaliana (Mouse-ear cress).